The sequence spans 704 residues: Elongation factor G (704 aa).

Positions 9 to 285 constitute a tr-type G domain; it reads AKVRNIGIMA…AIVAYLPSPL (277 aa). GTP contacts are provided by residues 18–25, 82–86, and 136–139; these read AHIDAGKT, DTPGH, and NKMD.

It belongs to the TRAFAC class translation factor GTPase superfamily. Classic translation factor GTPase family. EF-G/EF-2 subfamily.

It is found in the cytoplasm. In terms of biological role, catalyzes the GTP-dependent ribosomal translocation step during translation elongation. During this step, the ribosome changes from the pre-translocational (PRE) to the post-translocational (POST) state as the newly formed A-site-bound peptidyl-tRNA and P-site-bound deacylated tRNA move to the P and E sites, respectively. Catalyzes the coordinated movement of the two tRNA molecules, the mRNA and conformational changes in the ribosome. This chain is Elongation factor G, found in Thermobifida fusca (strain YX).